A 549-amino-acid chain; its full sequence is Undecaprenyl phosphate-alpha-4-amino-4-deoxy-L-arabinose arabinosyl transferase (549 aa).

A run of 12 helical transmembrane segments spans residues 9–29 (LLLI…GLWI), 80–100 (LFGV…LAYL), 112–132 (SLAC…SGYA), 136–156 (PQFT…LDAG), 166–186 (ILLG…AWLL), 204–224 (LLGY…PWAL), 256–276 (PWWF…GLLP), 288–308 (QAPV…FSLS), 312–332 (LPTY…HALV), 346–366 (NGLL…YLQL), 376–396 (FELF…LAQW), and 402–422 (AWAA…AAMP).

This sequence belongs to the glycosyltransferase 83 family.

The protein resides in the cell inner membrane. It catalyses the reaction 4-amino-4-deoxy-alpha-L-arabinopyranosyl di-trans,octa-cis-undecaprenyl phosphate + lipid IVA = lipid IIA + di-trans,octa-cis-undecaprenyl phosphate.. Its pathway is lipopolysaccharide metabolism; 4-amino-4-deoxy-beta-L-arabinose-lipid A biosynthesis. Functionally, catalyzes the transfer of the L-Ara4N moiety of the glycolipid undecaprenyl phosphate-alpha-L-Ara4N to lipid A. The modified arabinose is attached to lipid A and is required for resistance to polymyxin and cationic antimicrobial peptides. In Pseudomonas aeruginosa (strain UCBPP-PA14), this protein is Undecaprenyl phosphate-alpha-4-amino-4-deoxy-L-arabinose arabinosyl transferase.